A 63-amino-acid polypeptide reads, in one-letter code: Protein DsrB (63 aa).

Belongs to the DsrB family.

The sequence is that of Protein DsrB from Yersinia enterocolitica serotype O:8 / biotype 1B (strain NCTC 13174 / 8081).